A 1255-amino-acid chain; its full sequence is DNA-directed RNA polymerase subunit beta' (1255 aa).

Zn(2+) is bound by residues Cys60, Cys62, Cys77, and Cys80. Positions 503, 505, and 507 each coordinate Mg(2+). Zn(2+) contacts are provided by Cys875, Cys950, Cys957, and Cys960.

It belongs to the RNA polymerase beta' chain family. In terms of assembly, the RNAP catalytic core consists of 2 alpha, 1 beta, 1 beta' and 1 omega subunit. When a sigma factor is associated with the core the holoenzyme is formed, which can initiate transcription. Mg(2+) is required as a cofactor. Zn(2+) serves as cofactor.

It carries out the reaction RNA(n) + a ribonucleoside 5'-triphosphate = RNA(n+1) + diphosphate. Functionally, DNA-dependent RNA polymerase catalyzes the transcription of DNA into RNA using the four ribonucleoside triphosphates as substrates. The protein is DNA-directed RNA polymerase subunit beta' of Mycoplasma mycoides subsp. mycoides SC (strain CCUG 32753 / NCTC 10114 / PG1).